The sequence spans 212 residues: Adenylate kinase (212 aa).

10–15 (GAGKGT) lines the ATP pocket. Residues 30 to 59 (STGDMFRAAMANQTEMGRLAKSYIDKGELV) are NMP. Residues Thr-31, Arg-36, 57-59 (ELV), 86-89 (GYPR), and Gln-93 each bind AMP. An LID region spans residues 127-159 (GRIINRKTGETFHKVFNPPVDYKEEDYYQREDD). ATP-binding positions include Arg-128 and 137 to 138 (TF). Residues Arg-156 and Arg-167 each coordinate AMP. Gln-195 is an ATP binding site.

The protein belongs to the adenylate kinase family. Monomer.

The protein resides in the cytoplasm. The enzyme catalyses AMP + ATP = 2 ADP. The protein operates within purine metabolism; AMP biosynthesis via salvage pathway; AMP from ADP: step 1/1. Catalyzes the reversible transfer of the terminal phosphate group between ATP and AMP. Plays an important role in cellular energy homeostasis and in adenine nucleotide metabolism. The polypeptide is Adenylate kinase (Streptococcus agalactiae serotype Ia (strain ATCC 27591 / A909 / CDC SS700)).